Reading from the N-terminus, the 118-residue chain is Eukaryotic translation initiation factor 4E-binding protein 1 (118 aa).

Polar residues-rich tracts occupy residues 1–12 and 34–48; these read MSGGSSCSQTPS and YSTTPGGTLFSTTPG. Disordered stretches follow at residues 1-20 and 25-48; these read MSGGSSCSQTPSRAIPATRR and DGVQLPPGDYSTTPGGTLFSTTPG. N-acetylserine is present on S2. At T37 the chain carries Phosphothreonine; by MTOR. Residue T41 is modified to Phosphothreonine. S44 bears the Phosphoserine mark. Residue T46 is modified to Phosphothreonine; by MTOR. Position 50 is a phosphothreonine (T50). A Phosphotyrosine modification is found at Y54. The YXXXXLphi motif signature appears at 54-60; it reads YDRKFLM. K57 participates in a covalent cross-link: Glycyl lysine isopeptide (Lys-Gly) (interchain with G-Cter in ubiquitin). Positions 64-118 are disordered; that stretch reads NSPVTKTPPRDLPTIPGVTSPSSDEPPMEASQSHLRNSPEDKRAGGEESQFEMDI. S65 is modified (phosphoserine; by DYRK2, MAPK1, MAPK3 and MTOR). The residue at position 70 (T70) is a Phosphothreonine; by MTOR. T77 carries the post-translational modification Phosphothreonine. Residues S83 and S96 each carry the phosphoserine modification. Positions 100–109 are enriched in basic and acidic residues; the sequence is NSPEDKRAGG. At S101 the chain carries Phosphoserine; by DYRK2. Residue S112 is modified to Phosphoserine. Positions 114 to 118 match the TOS motif motif; the sequence is FEMDI.

Belongs to the eIF4E-binding protein family. In terms of assembly, hypophosphorylated EIF4EBP1 competes with EIF4G1/EIF4G3 to interact with EIF4E; insulin stimulated MAP-kinase (MAPK1 and MAPK3) or mTORC1 phosphorylation of EIF4EBP1 causes dissociation of the complex allowing EIF4G1/EIF4G3 to bind and consequent initiation of translation. Interacts (via TOS motif) with RPTOR; promoting phosphorylation by mTORC1. In terms of processing, phosphorylated on serine and threonine residues in response to insulin, EGF and PDGF. Phosphorylation at Thr-37, Thr-46, Ser-65 and Thr-70, corresponding to the hyperphosphorylated form, is regulated by mTORC1 and abolishes binding to EIF4E. Ubiquitinated: when eIF4E levels are low, hypophosphorylated form is ubiquitinated by the BCR(KLHL25) complex, leading to its degradation and serving as a homeostatic mechanism to maintain translation and prevent eIF4E inhibition when eIF4E levels are low. Not ubiquitinated when hyperphosphorylated (at Thr-37, Thr-46, Ser-65 and Thr-70) or associated with eIF4E.

The protein resides in the cytoplasm. The protein localises to the nucleus. Functionally, repressor of translation initiation that regulates EIF4E activity by preventing its assembly into the eIF4F complex: hypophosphorylated form competes with EIF4G1/EIF4G3 and strongly binds to EIF4E, leading to repress translation. In contrast, hyperphosphorylated form dissociates from EIF4E, allowing interaction between EIF4G1/EIF4G3 and EIF4E, leading to initiation of translation. Mediates the regulation of protein translation by hormones, growth factors and other stimuli that signal through the MAP kinase and mTORC1 pathways. The protein is Eukaryotic translation initiation factor 4E-binding protein 1 (EIF4EBP1) of Homo sapiens (Human).